Consider the following 466-residue polypeptide: cGMP-specific 3',5'-cGMP phosphodiesterase 3 (466 aa).

Low complexity predominate over residues 1–120 (MAPQQNIMKQ…NSNNNNSNNN (120 aa)). The tract at residues 1–150 (MAPQQNIMKQ…NNNKIRGYND (150 aa)) is disordered. The span at 123-134 (DDEEEEGDDEDN) shows a compositional bias: acidic residues. A compositionally biased stretch (low complexity) spans 135-150 (NNNNNSNNNKIRGYND). The region spanning 137-458 (NNNSNNNKIR…EIWSNNGSSS (322 aa)) is the PDEase domain. His-213 (proton donor) is an active-site residue. The a divalent metal cation site is built by His-217, His-253, Asp-254, and Asp-364.

This sequence belongs to the cyclic nucleotide phosphodiesterase family. It depends on a divalent metal cation as a cofactor.

The protein resides in the cytoplasm. The protein localises to the cytosol. It carries out the reaction 3',5'-cyclic GMP + H2O = GMP + H(+). Inhibited by 3-isobutyl-1-methylxanthine (IBMX). Its function is as follows. Phosphodiesterase specific for cGMP, which is not activated by cGMP. Involved in the degradation of intracellular cGMP. This is cGMP-specific 3',5'-cGMP phosphodiesterase 3 (pde3) from Dictyostelium discoideum (Social amoeba).